Here is an 88-residue protein sequence, read N- to C-terminus: Acylphosphatase (88 aa).

The region spanning A3–R88 is the Acylphosphatase-like domain. Catalysis depends on residues R18 and N36.

This sequence belongs to the acylphosphatase family.

The enzyme catalyses an acyl phosphate + H2O = a carboxylate + phosphate + H(+). The protein is Acylphosphatase (acyP) of Methanocella arvoryzae (strain DSM 22066 / NBRC 105507 / MRE50).